A 660-amino-acid chain; its full sequence is Acetyl-coenzyme A synthetase (660 aa).

Residues 197-200 (RGGK) and T317 contribute to the CoA site. ATP-binding positions include 397–399 (GEP), 421–426 (DTFWQT), D512, and R528. S536 contacts CoA. R539 is a binding site for ATP. The Mg(2+) site is built by V550 and V555. An N6-acetyllysine modification is found at K625.

This sequence belongs to the ATP-dependent AMP-binding enzyme family. It depends on Mg(2+) as a cofactor. Acetylated. Deacetylation by the SIR2-homolog deacetylase activates the enzyme.

The catalysed reaction is acetate + ATP + CoA = acetyl-CoA + AMP + diphosphate. Catalyzes the conversion of acetate into acetyl-CoA (AcCoA), an essential intermediate at the junction of anabolic and catabolic pathways. AcsA undergoes a two-step reaction. In the first half reaction, AcsA combines acetate with ATP to form acetyl-adenylate (AcAMP) intermediate. In the second half reaction, it can then transfer the acetyl group from AcAMP to the sulfhydryl group of CoA, forming the product AcCoA. This chain is Acetyl-coenzyme A synthetase, found in Herminiimonas arsenicoxydans.